Here is a 143-residue protein sequence, read N- to C-terminus: Large ribosomal subunit protein uL11 (143 aa).

It belongs to the universal ribosomal protein uL11 family. Part of the ribosomal stalk of the 50S ribosomal subunit. Interacts with L10 and the large rRNA to form the base of the stalk. L10 forms an elongated spine to which L12 dimers bind in a sequential fashion forming a multimeric L10(L12)X complex. In terms of processing, one or more lysine residues are methylated.

Functionally, forms part of the ribosomal stalk which helps the ribosome interact with GTP-bound translation factors. The polypeptide is Large ribosomal subunit protein uL11 (Caulobacter sp. (strain K31)).